The sequence spans 130 residues: Phosphoribosyl-ATP pyrophosphatase (130 aa).

It belongs to the PRA-PH family.

It localises to the cytoplasm. It catalyses the reaction 1-(5-phospho-beta-D-ribosyl)-ATP + H2O = 1-(5-phospho-beta-D-ribosyl)-5'-AMP + diphosphate + H(+). It functions in the pathway amino-acid biosynthesis; L-histidine biosynthesis; L-histidine from 5-phospho-alpha-D-ribose 1-diphosphate: step 2/9. In Albidiferax ferrireducens (strain ATCC BAA-621 / DSM 15236 / T118) (Rhodoferax ferrireducens), this protein is Phosphoribosyl-ATP pyrophosphatase.